Reading from the N-terminus, the 165-residue chain is Cysteine-rich hydrophobic domain-containing protein 2 (165 aa).

A coiled-coil region spans residues 1 to 26; it reads MADFDEIYEEEEDEERALEEQLLKYS. The CHIC motif (Cys-rich) motif lies at 88–106; the sequence is CGCLCCCCTLGCSMWPVIC.

It belongs to the CHIC family. Palmitoylation in the CHIC motif is required for membrane association.

Its subcellular location is the cell membrane. The protein localises to the cytoplasmic vesicle. In Homo sapiens (Human), this protein is Cysteine-rich hydrophobic domain-containing protein 2 (CHIC2).